A 263-amino-acid chain; its full sequence is 3-methyl-2-oxobutanoate hydroxymethyltransferase (263 aa).

Residues Asp45 and Asp84 each contribute to the Mg(2+) site. 3-methyl-2-oxobutanoate is bound by residues 45-46 (DS), Asp84, and Lys112. Glu114 lines the Mg(2+) pocket. Glu180 acts as the Proton acceptor in catalysis.

It belongs to the PanB family. In terms of assembly, homodecamer; pentamer of dimers. Mg(2+) is required as a cofactor.

It localises to the cytoplasm. The catalysed reaction is 3-methyl-2-oxobutanoate + (6R)-5,10-methylene-5,6,7,8-tetrahydrofolate + H2O = 2-dehydropantoate + (6S)-5,6,7,8-tetrahydrofolate. It participates in cofactor biosynthesis; (R)-pantothenate biosynthesis; (R)-pantoate from 3-methyl-2-oxobutanoate: step 1/2. In terms of biological role, catalyzes the reversible reaction in which hydroxymethyl group from 5,10-methylenetetrahydrofolate is transferred onto alpha-ketoisovalerate to form ketopantoate. The protein is 3-methyl-2-oxobutanoate hydroxymethyltransferase of Salmonella enteritidis PT4 (strain P125109).